An 828-amino-acid polypeptide reads, in one-letter code: Periplasmic nitrate reductase (828 aa).

The segment at residues 1-31 (MKLSRRSFMKANAVAAAAAAAGLSVPGVARA) is a signal peptide (tat-type signal). One can recognise a 4Fe-4S Mo/W bis-MGD-type domain in the interval 39 to 95 (IKWDKAPCRFCGTGCGVLVGTQQGRVVACQGDPDAPVNRGLNCIKGYFLPKIMYGKD). 4 residues coordinate [4Fe-4S] cluster: Cys-46, Cys-49, Cys-53, and Cys-81. Mo-bis(molybdopterin guanine dinucleotide) contacts are provided by residues Lys-83, Gln-150, Asn-175, Cys-179, 212 to 219 (WGANMAEM), 243 to 247 (STYQH), 262 to 264 (QSD), Met-372, Gln-376, Asn-482, 508 to 509 (SD), Lys-531, Asp-558, and 718 to 727 (TGRVLEHWHT). Residue Phe-794 participates in substrate binding. 2 residues coordinate Mo-bis(molybdopterin guanine dinucleotide): Asn-802 and Lys-819.

The protein belongs to the prokaryotic molybdopterin-containing oxidoreductase family. NasA/NapA/NarB subfamily. In terms of assembly, component of the periplasmic nitrate reductase NapAB complex composed of NapA and NapB. The cofactor is [4Fe-4S] cluster. Mo-bis(molybdopterin guanine dinucleotide) serves as cofactor. In terms of processing, predicted to be exported by the Tat system. The position of the signal peptide cleavage has not been experimentally proven.

It localises to the periplasm. The catalysed reaction is 2 Fe(II)-[cytochrome] + nitrate + 2 H(+) = 2 Fe(III)-[cytochrome] + nitrite + H2O. In terms of biological role, catalytic subunit of the periplasmic nitrate reductase complex NapAB. Receives electrons from NapB and catalyzes the reduction of nitrate to nitrite. This chain is Periplasmic nitrate reductase, found in Escherichia coli O7:K1 (strain IAI39 / ExPEC).